We begin with the raw amino-acid sequence, 473 residues long: MSKEEFMKIQTCVLKVNIHCDGCKQKVKKILQKIEGVFTTKIDSEQGKVTVSGSVDPSVLIKKLAKSGKHAEIWGAPKGNNNPNQSQMANQFKGMQIDHGKAGGGGGGNNNNNKKGQKNGGGGGGGGGGGNSNAPKMGQQLNPQHLQQLQQLQKMKGFQDLKLPPQLKGSVPVNKNQNQKGVKFDVPEDDDDDDFSDEFDDEFTDDDDDEFDDEFDDLPLPSNKMKPNMTMMPNAQQMMMNAQKNANLAGGPAKNGGKGAPAAGGGGAGGGKGAGGGAKGGPGNQNQGGGKNGGGGHPQDGKNGGGGGGPNAGKKGNGGGGPMAGGVSGGFRPMGGGGPQNMSMPMGGQMGMGGPMGNMPAVQGLPATGPGGAPQGYFQGAGIDPMQMQQQQQQQQYLAAVMNQQRAMGNERFQPMMYARPPPAVNYMPPNPHQYPNPHPYPYPYPYPYPPPYGNDQYSHAFSDENTSSCDIM.

In terms of domain architecture, HMA spans 9–72 (IQTCVLKVNI…KLAKSGKHAE (64 aa)). Positions 20 and 23 each coordinate a metal cation. 3 disordered regions span residues 96-139 (QIDH…KMGQ), 162-230 (KLPP…PNMT), and 246-343 (ANLA…QNMS). Gly residues predominate over residues 118-131 (KNGGGGGGGGGGGN). Over residues 187-217 (PEDDDDDDFSDEFDDEFTDDDDDEFDDEFDD) the composition is skewed to acidic residues. The span at 253-339 (AKNGGKGAPA…GFRPMGGGGP (87 aa)) shows a compositional bias: gly residues. Cys470 carries the post-translational modification Cysteine methyl ester. Cys470 carries S-farnesyl cysteine lipidation. A propeptide spans 471-473 (DIM) (removed in mature form).

This sequence belongs to the HIPP family.

Its function is as follows. Heavy-metal-binding protein. The sequence is that of Heavy metal-associated isoprenylated plant protein 32 from Arabidopsis thaliana (Mouse-ear cress).